A 585-amino-acid polypeptide reads, in one-letter code: 2-succinyl-5-enolpyruvyl-6-hydroxy-3-cyclohexene-1-carboxylate synthase (585 aa).

It belongs to the TPP enzyme family. MenD subfamily. Homodimer. The cofactor is Mg(2+). It depends on Mn(2+) as a cofactor. Thiamine diphosphate serves as cofactor.

It catalyses the reaction isochorismate + 2-oxoglutarate + H(+) = 5-enolpyruvoyl-6-hydroxy-2-succinyl-cyclohex-3-ene-1-carboxylate + CO2. Its pathway is quinol/quinone metabolism; 1,4-dihydroxy-2-naphthoate biosynthesis; 1,4-dihydroxy-2-naphthoate from chorismate: step 2/7. The protein operates within cofactor biosynthesis; phylloquinone biosynthesis. Catalyzes the thiamine diphosphate-dependent decarboxylation of 2-oxoglutarate and the subsequent addition of the resulting succinic semialdehyde-thiamine pyrophosphate anion to isochorismate to yield 2-succinyl-5-enolpyruvyl-6-hydroxy-3-cyclohexene-1-carboxylate (SEPHCHC). The sequence is that of 2-succinyl-5-enolpyruvyl-6-hydroxy-3-cyclohexene-1-carboxylate synthase from Crocosphaera subtropica (strain ATCC 51142 / BH68) (Cyanothece sp. (strain ATCC 51142)).